A 365-amino-acid chain; its full sequence is S-adenosylmethionine decarboxylase proenzyme (365 aa).

Catalysis depends on residues Glu31 and Glu34. The active-site Schiff-base intermediate with substrate; via pyruvic acid is Ser87. At Ser87 the chain carries Pyruvic acid (Ser); by autocatalysis. Residue Cys101 is the Proton donor; for catalytic activity of the active site. Catalysis depends on proton acceptor; for processing activity residues Ser248 and His263.

The protein belongs to the eukaryotic AdoMetDC family. As to quaternary structure, heterotetramer of two alpha and two beta chains. The cofactor is pyruvate. In terms of processing, is synthesized initially as an inactive proenzyme. Formation of the active enzyme involves a self-maturation process in which the active site pyruvoyl group is generated from an internal serine residue via an autocatalytic post-translational modification. Two non-identical subunits are generated from the proenzyme in this reaction, and the pyruvate is formed at the N-terminus of the alpha chain, which is derived from the carboxyl end of the proenzyme. The post-translation cleavage follows an unusual pathway, termed non-hydrolytic serinolysis, in which the side chain hydroxyl group of the serine supplies its oxygen atom to form the C-terminus of the beta chain, while the remainder of the serine residue undergoes an oxidative deamination to produce ammonia and the pyruvoyl group blocking the N-terminus of the alpha chain.

The enzyme catalyses S-adenosyl-L-methionine + H(+) = S-adenosyl 3-(methylsulfanyl)propylamine + CO2. It participates in amine and polyamine biosynthesis; S-adenosylmethioninamine biosynthesis; S-adenosylmethioninamine from S-adenosyl-L-methionine: step 1/1. This is S-adenosylmethionine decarboxylase proenzyme (smd-1) from Onchocerca volvulus.